The following is a 145-amino-acid chain: YIDKETMILHHDKHHATYLANANAALEKHPEIGEDLEFLLSDVTRIPEDIRQALINNGGGHLNHALFWELLTPEKQEPTAEVLAAIEDAFGSFEDFKTAFTQAATTRFGSGWAWLVVNQEGKLEVMSTGNQDNPISQGKQPILGL.

Fe(3+) is bound by residues His10 and His64. Mn(2+) is bound by residues His10 and His64.

It belongs to the iron/manganese superoxide dismutase family. It depends on Mn(2+) as a cofactor. The cofactor is Fe(3+).

The catalysed reaction is 2 superoxide + 2 H(+) = H2O2 + O2. In terms of biological role, destroys superoxide anion radicals which are normally produced within the cells and which are toxic to biological systems. Catalyzes the dismutation of superoxide anion radicals into O2 and H2O2 by successive reduction and oxidation of the transition metal ion at the active site. The protein is Superoxide dismutase [Mn/Fe] (sodA) of Streptococcus alactolyticus.